The primary structure comprises 332 residues: Large ribosomal subunit protein mL44 (332 aa).

The transit peptide at 1–30 (MASGLVRLLQQGPRCLLAPVAPKLVPPVRG) directs the protein to the mitochondrion. Residues 86 to 228 (DLLKTAFVNS…LITQMTGKEL (143 aa)) form the RNase III domain. The DRBM domain maps to 236–306 (NPMGLLVEEL…ARVALRKLYG (71 aa)).

Belongs to the ribonuclease III family. Mitochondrion-specific ribosomal protein mL44 subfamily. Component of the mitochondrial ribosome large subunit (39S) which comprises a 16S rRNA and about 50 distinct proteins.

It is found in the mitochondrion. Functionally, component of the 39S subunit of mitochondrial ribosome. May have a function in the assembly/stability of nascent mitochondrial polypeptides exiting the ribosome. In Pongo abelii (Sumatran orangutan), this protein is Large ribosomal subunit protein mL44 (MRPL44).